The primary structure comprises 426 residues: UPF0229 protein Csal_0882 (426 aa).

Residues 82–93 (FVEGDRLRRPGG) are compositionally biased toward basic and acidic residues. The disordered stretch occupies residues 82–109 (FVEGDRLRRPGGEGRGGSGEGSASNQGE).

This sequence belongs to the UPF0229 family.

The chain is UPF0229 protein Csal_0882 from Chromohalobacter salexigens (strain ATCC BAA-138 / DSM 3043 / CIP 106854 / NCIMB 13768 / 1H11).